Consider the following 130-residue polypeptide: Small ribosomal subunit protein uS9 (130 aa).

It belongs to the universal ribosomal protein uS9 family.

The sequence is that of Small ribosomal subunit protein uS9 from Pseudomonas fluorescens (strain Pf0-1).